The chain runs to 316 residues: Lipoyl synthase (316 aa).

Residues 1–15 (MKARNESMSKGEYKT) show a composition bias toward basic and acidic residues. Residues 1–33 (MKARNESMSKGEYKTKSLKNRPDPTQPKLKKPS) form a disordered region. [4Fe-4S] cluster contacts are provided by Cys-64, Cys-69, Cys-75, Cys-90, Cys-94, Cys-97, and Ser-304. One can recognise a Radical SAM core domain in the interval 76-293 (FGHGTATFMI…EQAGMEMGFT (218 aa)).

The protein belongs to the radical SAM superfamily. Lipoyl synthase family. [4Fe-4S] cluster is required as a cofactor.

It is found in the cytoplasm. It carries out the reaction [[Fe-S] cluster scaffold protein carrying a second [4Fe-4S](2+) cluster] + N(6)-octanoyl-L-lysyl-[protein] + 2 oxidized [2Fe-2S]-[ferredoxin] + 2 S-adenosyl-L-methionine + 4 H(+) = [[Fe-S] cluster scaffold protein] + N(6)-[(R)-dihydrolipoyl]-L-lysyl-[protein] + 4 Fe(3+) + 2 hydrogen sulfide + 2 5'-deoxyadenosine + 2 L-methionine + 2 reduced [2Fe-2S]-[ferredoxin]. It functions in the pathway protein modification; protein lipoylation via endogenous pathway; protein N(6)-(lipoyl)lysine from octanoyl-[acyl-carrier-protein]: step 2/2. Catalyzes the radical-mediated insertion of two sulfur atoms into the C-6 and C-8 positions of the octanoyl moiety bound to the lipoyl domains of lipoate-dependent enzymes, thereby converting the octanoylated domains into lipoylated derivatives. This Hydrogenovibrio crunogenus (strain DSM 25203 / XCL-2) (Thiomicrospira crunogena) protein is Lipoyl synthase.